Consider the following 525-residue polypeptide: AarF domain-containing protein kinase 1 (525 aa).

The Protein kinase domain maps to 148–477 (SFDDTPLGAA…HKKRDAGSFF (330 aa)). ATP-binding positions include 154–162 (LGAASLAQV) and Lys-176. Asp-308 serves as the catalytic Proton acceptor.

Belongs to the protein kinase superfamily. ADCK protein kinase family.

The protein localises to the mitochondrion. Appears to be essential for maintaining mitochondrial cristae formation and mitochondrial function by acting via YME1L1 in a kinase-independent manner to regulate essential mitochondrial structural proteins OPA1 and IMMT. The action of this enzyme is not yet clear. It is not known if it has protein kinase activity and what type of substrate it would phosphorylate (Ser, Thr or Tyr). The polypeptide is AarF domain-containing protein kinase 1 (Adck1) (Mus musculus (Mouse)).